Reading from the N-terminus, the 322-residue chain is uncharacterized protein (322 aa).

The region spanning 34–286 (KFKQKIFKIP…QRLSKDKVPE (253 aa)) is the Radical SAM core domain. 3 residues coordinate [4Fe-4S] cluster: Cys-50, Cys-58, and Cys-61.

Belongs to the radical SAM superfamily. The cofactor is [4Fe-4S] cluster.

This is an uncharacterized protein from Methanocaldococcus jannaschii (strain ATCC 43067 / DSM 2661 / JAL-1 / JCM 10045 / NBRC 100440) (Methanococcus jannaschii).